We begin with the raw amino-acid sequence, 155 residues long: Ribonuclease H (155 aa).

Residues 4–145 (TEPTVYAYTD…ADRLANRGID (142 aa)) form the RNase H type-1 domain. Residues aspartate 13, glutamate 51, aspartate 73, and aspartate 137 each coordinate Mg(2+).

Belongs to the RNase H family. In terms of assembly, monomer. Requires Mg(2+) as cofactor.

The protein resides in the cytoplasm. The catalysed reaction is Endonucleolytic cleavage to 5'-phosphomonoester.. Its function is as follows. Endonuclease that specifically degrades the RNA of RNA-DNA hybrids. The protein is Ribonuclease H of Methylococcus capsulatus (strain ATCC 33009 / NCIMB 11132 / Bath).